We begin with the raw amino-acid sequence, 226 residues long: Lipoprotein-releasing system ATP-binding protein LolD (226 aa).

The ABC transporter domain maps to 5-226; the sequence is LRCEKISKFY…MADGVLREAS (222 aa). Residue 41–48 participates in ATP binding; sequence GSSGSGKS.

Belongs to the ABC transporter superfamily. Lipoprotein translocase (TC 3.A.1.125) family. The complex is composed of two ATP-binding proteins (LolD) and two transmembrane proteins (LolC and LolE).

It localises to the cell inner membrane. Its function is as follows. Part of the ABC transporter complex LolCDE involved in the translocation of mature outer membrane-directed lipoproteins, from the inner membrane to the periplasmic chaperone, LolA. Responsible for the formation of the LolA-lipoprotein complex in an ATP-dependent manner. In Haemophilus ducreyi (strain 35000HP / ATCC 700724), this protein is Lipoprotein-releasing system ATP-binding protein LolD.